The following is a 197-amino-acid chain: Putative RING-H2 finger protein ATL71 (197 aa).

Residues 20-40 (MGGLAYGIGVSIGILMLITTI) form a helical membrane-spanning segment. The segment at 53-80 (SASPTTTPRTRRRQRESNGTLPPGQERF) is disordered. The segment at 129–171 (CSICLADYKKMDMIRVLPDCNHLFHDNCVDPWLRLHPTCPVCR) adopts an RING-type; atypical zinc-finger fold.

Belongs to the RING-type zinc finger family. ATL subfamily.

The protein localises to the membrane. It catalyses the reaction S-ubiquitinyl-[E2 ubiquitin-conjugating enzyme]-L-cysteine + [acceptor protein]-L-lysine = [E2 ubiquitin-conjugating enzyme]-L-cysteine + N(6)-ubiquitinyl-[acceptor protein]-L-lysine.. It participates in protein modification; protein ubiquitination. This is Putative RING-H2 finger protein ATL71 (ATL71) from Arabidopsis thaliana (Mouse-ear cress).